Consider the following 492-residue polypeptide: MASAEVFKANVEAVTRDYICEPRIEYRTVGGVSGPLVVVELVKRPKFAEIVNIRLGNGTSRRGQVLEVDGNRAVVQVFEGTSGIDNRNTTLQFTGEVLSTPVSKDMLGRVFNGSGKPIDGGPTVLAEAYLDIQGSSINPSERTYPEEMSQTGVSTIDVMNSIARGQKIPLFSAAGLPHNDIAAQICRQAGLVRQKAQDSMIDAGREEEEFAIVFAAMGVNMETAHYFKQDFEENGSMEKTVLFLNLANDPTIERIITPRIALTTAEYLAYECGKHVLVILTDMSSYADALREVSAAREEVPGRRGYPGYMYTDLATIYERAGRIEGRKGSITQLPILTMPNDDITHPIPDLTGYITEGQIYVDRQLHNIQIYPPINVLPTLSRLMKSAIGEGMTRKDHSEVSNQLYDNYAIGKDVAAMKAVVGEEALSSEDLLYLEFLDKFERKFVNQGHYEARTIFDSLDLAWTLLRLFPKELLRRITAKTLEKMYERSES.

Belongs to the ATPase alpha/beta chains family. In terms of assembly, V-ATPase is a heteromultimeric enzyme composed of a peripheral catalytic V1 complex (main components: subunits A, B, C, D, E, and F) attached to an integral membrane V0 proton pore complex (main component: the proteolipid protein).

Non-catalytic subunit of the peripheral V1 complex of vacuolar ATPase. V-ATPase is responsible for acidifying a variety of intracellular compartments in eukaryotic cells. The polypeptide is V-type proton ATPase subunit B 2 (Acetabularia acetabulum (Mermaid's wine glass)).